We begin with the raw amino-acid sequence, 131 residues long: Small ribosomal subunit protein uS8 (131 aa).

This sequence belongs to the universal ribosomal protein uS8 family. Part of the 30S ribosomal subunit. Contacts proteins S5 and S12.

Its function is as follows. One of the primary rRNA binding proteins, it binds directly to 16S rRNA central domain where it helps coordinate assembly of the platform of the 30S subunit. The chain is Small ribosomal subunit protein uS8 from Verminephrobacter eiseniae (strain EF01-2).